The following is a 637-amino-acid chain: 1-deoxy-D-xylulose-5-phosphate synthase (637 aa).

Thiamine diphosphate is bound by residues histidine 71 and 112 to 114 (SHA). Aspartate 144 lines the Mg(2+) pocket. Residues 145–146 (GA), asparagine 173, tyrosine 284, and glutamate 365 each bind thiamine diphosphate. Asparagine 173 lines the Mg(2+) pocket.

It belongs to the transketolase family. DXPS subfamily. In terms of assembly, homodimer. Mg(2+) is required as a cofactor. The cofactor is thiamine diphosphate.

The catalysed reaction is D-glyceraldehyde 3-phosphate + pyruvate + H(+) = 1-deoxy-D-xylulose 5-phosphate + CO2. It functions in the pathway metabolic intermediate biosynthesis; 1-deoxy-D-xylulose 5-phosphate biosynthesis; 1-deoxy-D-xylulose 5-phosphate from D-glyceraldehyde 3-phosphate and pyruvate: step 1/1. Catalyzes the acyloin condensation reaction between C atoms 2 and 3 of pyruvate and glyceraldehyde 3-phosphate to yield 1-deoxy-D-xylulose-5-phosphate (DXP). The sequence is that of 1-deoxy-D-xylulose-5-phosphate synthase from Mycolicibacterium gilvum (strain PYR-GCK) (Mycobacterium gilvum (strain PYR-GCK)).